Consider the following 375-residue polypeptide: Chaperone protein DnaJ (375 aa).

The J domain occupies D5–G70. The segment at G136–E214 adopts a CR-type zinc-finger fold. The Zn(2+) site is built by C149, C152, C166, C169, C188, C191, C202, and C205. 4 CXXCXGXG motif repeats span residues C149–G156, C166–G173, C188–G195, and C202–G209.

This sequence belongs to the DnaJ family. As to quaternary structure, homodimer. Zn(2+) serves as cofactor.

It is found in the cytoplasm. Participates actively in the response to hyperosmotic and heat shock by preventing the aggregation of stress-denatured proteins and by disaggregating proteins, also in an autonomous, DnaK-independent fashion. Unfolded proteins bind initially to DnaJ; upon interaction with the DnaJ-bound protein, DnaK hydrolyzes its bound ATP, resulting in the formation of a stable complex. GrpE releases ADP from DnaK; ATP binding to DnaK triggers the release of the substrate protein, thus completing the reaction cycle. Several rounds of ATP-dependent interactions between DnaJ, DnaK and GrpE are required for fully efficient folding. Also involved, together with DnaK and GrpE, in the DNA replication of plasmids through activation of initiation proteins. The sequence is that of Chaperone protein DnaJ from Rhizobium etli (strain CIAT 652).